Here is a 325-residue protein sequence, read N- to C-terminus: Elongation factor P--(R)-beta-lysine ligase (325 aa).

76 to 78 lines the substrate pocket; the sequence is SPE. ATP is bound by residues 100 to 102 and Asn109; that span reads RNE. Substrate is bound at residue Tyr118. 244 to 245 provides a ligand contact to ATP; it reads EL. Glu251 is a substrate binding site. Residue Gly300 coordinates ATP.

Belongs to the class-II aminoacyl-tRNA synthetase family. EpmA subfamily. As to quaternary structure, homodimer.

It catalyses the reaction D-beta-lysine + L-lysyl-[protein] + ATP = N(6)-((3R)-3,6-diaminohexanoyl)-L-lysyl-[protein] + AMP + diphosphate + H(+). Functionally, with EpmB is involved in the beta-lysylation step of the post-translational modification of translation elongation factor P (EF-P) on 'Lys-34'. Catalyzes the ATP-dependent activation of (R)-beta-lysine produced by EpmB, forming a lysyl-adenylate, from which the beta-lysyl moiety is then transferred to the epsilon-amino group of EF-P 'Lys-34'. The chain is Elongation factor P--(R)-beta-lysine ligase from Escherichia coli O139:H28 (strain E24377A / ETEC).